A 30-amino-acid chain; its full sequence is Cycloviolacin-O5 (30 aa).

The cyclopeptide (Gly-Asn) cross-link spans 1-30; it reads GTPCGESCVWIPCISSAVGCSCKNKVCYKN. Disulfide bonds link Cys4–Cys20, Cys8–Cys22, and Cys13–Cys27.

This is a cyclic peptide.

Functionally, probably participates in a plant defense mechanism. The sequence is that of Cycloviolacin-O5 from Viola odorata (Sweet violet).